The primary structure comprises 868 residues: uncharacterized protein (868 aa).

The protein localises to the cytoplasm. Its subcellular location is the nucleus. This is an uncharacterized protein from Schizosaccharomyces pombe (strain 972 / ATCC 24843) (Fission yeast).